The following is a 358-amino-acid chain: Protein-L-isoaspartate O-methyltransferase domain-containing protein 1 (358 aa).

G2 is lipidated: N-myristoyl glycine. S64 is a catalytic residue. AdoMet binding motif stretches follow at residues 85-94 (LNLGSGTGYL), 160-164 (YDRIY), and 181-191 (LKVGGILVMPI). The interval 240–250 (VRNLQDLARIY) is BC-box. The segment at 300–339 (PLDSEEDERMEDDNKEEEDKDHSEALKPEEPPRNLLREKI) is disordered. Acidic residues predominate over residues 302 to 318 (DSEEDERMEDDNKEEED). Basic and acidic residues predominate over residues 319–339 (KDHSEALKPEEPPRNLLREKI). Positions 342–345 (LPLP) are CUL-box.

It belongs to the methyltransferase superfamily. L-isoaspartyl/D-aspartyl protein methyltransferase family. Component of the probable ECS(PCMTD1) E3 ubiquitin-protein ligase complex, at least composed of CUL5, ELOB, ELOC, RBX2 and PCMTD1.

Its subcellular location is the cytoplasm. The protein resides in the membrane. In terms of biological role, substrate recognition component of an ECS (Elongin BC-CUL5-SOCS-box protein) E3 ubiquitin ligase complex which mediates the ubiquitination and subsequent proteasomal degradation of target proteins. Specifically binds to the methyltransferase cofactor S-adenosylmethionine (AdoMet) via the N-terminal AdoMet binding motif, but does not display methyltransferase activity. May provide an alternate maintenance pathway for modified proteins by acting as a damage-specific E3 ubiquitin ligase adaptor protein. The sequence is that of Protein-L-isoaspartate O-methyltransferase domain-containing protein 1 (PCMTD1) from Gallus gallus (Chicken).